The primary structure comprises 393 residues: S-adenosylmethionine synthase (393 aa).

Glu-9 lines the Mg(2+) pocket. An ATP-binding site is contributed by His-15. Glu-43 contacts K(+). The L-methionine site is built by Glu-56 and Gln-99. ATP is bound by residues 167-169 (DGK), 235-238 (SGRF), Asp-246, 252-253 (RK), Ala-269, Lys-273, and Lys-277. Residue Asp-246 participates in L-methionine binding. Lys-277 provides a ligand contact to L-methionine.

Belongs to the AdoMet synthase family. As to quaternary structure, homotetramer. Mn(2+) is required as a cofactor. Mg(2+) serves as cofactor. Requires Co(2+) as cofactor. It depends on K(+) as a cofactor.

The protein localises to the cytoplasm. The enzyme catalyses L-methionine + ATP + H2O = S-adenosyl-L-methionine + phosphate + diphosphate. It participates in amino-acid biosynthesis; S-adenosyl-L-methionine biosynthesis; S-adenosyl-L-methionine from L-methionine: step 1/1. Functionally, catalyzes the formation of S-adenosylmethionine from methionine and ATP. The reaction comprises two steps that are both catalyzed by the same enzyme: formation of S-adenosylmethionine (AdoMet) and triphosphate, and subsequent hydrolysis of the triphosphate. This chain is S-adenosylmethionine synthase (SAMS), found in Brassica rapa subsp. pekinensis (Chinese cabbage).